The sequence spans 265 residues: 3-methyl-2-oxobutanoate hydroxymethyltransferase (265 aa).

Mg(2+) contacts are provided by D44 and D83. 3-methyl-2-oxobutanoate-binding positions include 44–45 (DS), D83, and K113. Residue E115 participates in Mg(2+) binding. E182 acts as the Proton acceptor in catalysis.

This sequence belongs to the PanB family. As to quaternary structure, homodecamer; pentamer of dimers. The cofactor is Mg(2+).

It localises to the cytoplasm. The catalysed reaction is 3-methyl-2-oxobutanoate + (6R)-5,10-methylene-5,6,7,8-tetrahydrofolate + H2O = 2-dehydropantoate + (6S)-5,6,7,8-tetrahydrofolate. The protein operates within cofactor biosynthesis; (R)-pantothenate biosynthesis; (R)-pantoate from 3-methyl-2-oxobutanoate: step 1/2. Its function is as follows. Catalyzes the reversible reaction in which hydroxymethyl group from 5,10-methylenetetrahydrofolate is transferred onto alpha-ketoisovalerate to form ketopantoate. This is 3-methyl-2-oxobutanoate hydroxymethyltransferase from Aquifex aeolicus (strain VF5).